The following is a 63-amino-acid chain: Insect toxin TbIT-1 (63 aa).

The region spanning 2–63 is the LCN-type CS-alpha/beta domain; sequence KEGYPVDSRG…VYDNASNKCB (62 aa). Disulfide bonds link Cys12–Cys62, Cys16–Cys38, Cys24–Cys43, and Cys28–Cys45.

The protein belongs to the long (4 C-C) scorpion toxin superfamily. Sodium channel inhibitor family. Beta subfamily. As to expression, expressed by the venom gland.

Its subcellular location is the secreted. In terms of biological role, beta toxins bind voltage-independently at site-4 of sodium channels (Nav) and shift the voltage of activation toward more negative potentials thereby affecting sodium channel activation and promoting spontaneous and repetitive firing. This toxin is only active against insects. The sequence is that of Insect toxin TbIT-1 from Tityus bahiensis (Brazilian scorpion).